We begin with the raw amino-acid sequence, 395 residues long: Flap endonuclease 1 (395 aa).

The interval Met-1–Lys-104 is N-domain. Asp-34 lines the Mg(2+) pocket. Residues Arg-47 and Arg-70 each contribute to the DNA site. Mg(2+) is bound by residues Asp-86, Glu-158, Glu-160, Asp-179, and Asp-181. The interval Glu-122–His-253 is I-domain. Position 158 (Glu-158) interacts with DNA. DNA-binding residues include Gly-231 and Asp-233. A Mg(2+)-binding site is contributed by Asp-233. Residues Gln-341–Phe-349 form an interaction with PCNA region. Over residues Ala-360–Ser-389 the composition is skewed to basic and acidic residues. The segment at Ala-360–Thr-395 is disordered.

It belongs to the XPG/RAD2 endonuclease family. FEN1 subfamily. In terms of assembly, interacts with PCNA. Three molecules of FEN1 bind to one PCNA trimer with each molecule binding to one PCNA monomer. PCNA stimulates the nuclease activity without altering cleavage specificity. Mg(2+) serves as cofactor. In terms of processing, phosphorylated. Phosphorylation upon DNA damage induces relocalization to the nuclear plasma.

It is found in the nucleus. It localises to the nucleolus. The protein resides in the nucleoplasm. The protein localises to the mitochondrion. Structure-specific nuclease with 5'-flap endonuclease and 5'-3' exonuclease activities involved in DNA replication and repair. During DNA replication, cleaves the 5'-overhanging flap structure that is generated by displacement synthesis when DNA polymerase encounters the 5'-end of a downstream Okazaki fragment. It enters the flap from the 5'-end and then tracks to cleave the flap base, leaving a nick for ligation. Also involved in the long patch base excision repair (LP-BER) pathway, by cleaving within the apurinic/apyrimidinic (AP) site-terminated flap. Acts as a genome stabilization factor that prevents flaps from equilibrating into structures that lead to duplications and deletions. Also possesses 5'-3' exonuclease activity on nicked or gapped double-stranded DNA, and exhibits RNase H activity. Also involved in replication and repair of rDNA and in repairing mitochondrial DNA. The sequence is that of Flap endonuclease 1 from Ajellomyces capsulatus (strain NAm1 / WU24) (Darling's disease fungus).